A 469-amino-acid polypeptide reads, in one-letter code: uncharacterized protein (469 aa).

The N-terminal stretch at 1 to 19 is a signal peptide; sequence MRINFVLLITLILPWFVSG. 7 helical membrane-spanning segments follow: residues 199–219, 236–256, 283–303, 305–325, 338–358, 386–406, and 413–433; these read IKSTLLAISMFLGFITLTWLL, AFWVFIFVFTHSYQVYSMVAI, AYTSFLLVLCFGLGITKPALV, YYVYLAFVAFVQGLFVTFAPL, ILLKLIWNIYTFVYYGLPFFA, IALAAVTVSNCLFLGVVRPLL, and GFQLITSCITFVDFLVFAFLF.

It localises to the membrane. This is an uncharacterized protein from Schizosaccharomyces pombe (strain 972 / ATCC 24843) (Fission yeast).